Consider the following 218-residue polypeptide: Small ribosomal subunit protein uS5 (218 aa).

The 64-residue stretch at 55–118 (LDHEVIDVSI…RNAKLNIIPV (64 aa)) folds into the S5 DRBM domain.

The protein belongs to the universal ribosomal protein uS5 family. Part of the 30S ribosomal subunit. Contacts protein S4.

With S4 and S12 plays an important role in translational accuracy. The chain is Small ribosomal subunit protein uS5 from Aeropyrum pernix (strain ATCC 700893 / DSM 11879 / JCM 9820 / NBRC 100138 / K1).